We begin with the raw amino-acid sequence, 130 residues long: Small ribosomal subunit protein uS8 (130 aa).

The protein belongs to the universal ribosomal protein uS8 family. Part of the 30S ribosomal subunit. Contacts proteins S5 and S12.

Its function is as follows. One of the primary rRNA binding proteins, it binds directly to 16S rRNA central domain where it helps coordinate assembly of the platform of the 30S subunit. This Pseudomonas fluorescens (strain SBW25) protein is Small ribosomal subunit protein uS8.